Reading from the N-terminus, the 182-residue chain is MASRGVNKVILVGNLGQDPEVRYMPNGGAVANITLATSESWRDKQTGEQKEKTEWHRVVLFGKLAEVAGEYLRKGSQVYIEGALQTRKWQDQSGQERYTTEVVVNVGGTMQMLGGRQGGGAPAGGGAAPQDGGAQGGWGQPQQPQGGNQFSGGQASRPAQPAPAAPQGGNEPPMDFDDDIPF.

Residues 6–111 form the SSB domain; it reads VNKVILVGNL…VVVNVGGTMQ (106 aa). A DNA-binding region spans residues 55 to 61; the sequence is WHRVVLF. The tract at residues 113–182 is disordered; sequence LGGRQGGGAP…PMDFDDDIPF (70 aa). Gly residues predominate over residues 115 to 139; the sequence is GRQGGGAPAGGGAAPQDGGAQGGWG. The span at 140 to 159 shows a compositional bias: low complexity; the sequence is QPQQPQGGNQFSGGQASRPA. An Important for interaction with partner proteins motif is present at residues 177-182; sequence DDDIPF.

In terms of assembly, homotetramer.

In terms of biological role, plays an important role in DNA replication, recombination and repair. Binds to ssDNA and to an array of partner proteins to recruit them to their sites of action during DNA metabolism. The protein is Single-stranded DNA-binding protein (ssb) of Yersinia pestis.